The chain runs to 738 residues: uncharacterized protein (738 aa).

Residues 1 to 10 (MQKKVVQSAS) are compositionally biased toward polar residues. 3 disordered regions span residues 1-23 (MQKK…KRSS), 53-83 (EGTH…NPNP), and 219-266 (HQDG…PLST). The segment covering 55–77 (THSASVHPSTSSTSHISSPSAFS) has biased composition (low complexity). A compositionally biased stretch (polar residues) spans 246-266 (GSPSPNRSLNVSNNTTPPLST). Phosphothreonine is present on residues T260 and T261. Positions 292 to 318 (CAKCQKDNKKCDDARPCQRCIKAKTDC) form a DNA-binding region, zn(2)-C6 fungal-type. The span at 323–335 (RKKRPTGVRRGPY) shows a compositional bias: basic residues. Disordered regions lie at residues 323-372 (RKKR…SDNQ) and 441-464 (DETG…SFTN). The span at 340–352 (DTSNNTKSTTASS) shows a compositional bias: low complexity. A compositionally biased stretch (polar residues) spans 353-372 (GHSTQDSLSSKMLDPSSDNQ).

It localises to the cytoplasm. Its subcellular location is the nucleus. This is an uncharacterized protein from Schizosaccharomyces pombe (strain 972 / ATCC 24843) (Fission yeast).